The chain runs to 305 residues: Phosphoinositol dihydroceramide synthase (305 aa).

An N-terminal signal peptide occupies residues 1 to 23 (MPSKKETLTVIVIMALFLLLTAA). Cys24 carries N-palmitoyl cysteine lipidation. A lipid anchor (S-diacylglycerol cysteine) is attached at Cys24. 6 consecutive transmembrane segments (helical) span residues 41-61 (LFFA…FAIF), 117-137 (VFAG…GLCL), 149-169 (FALV…IHPA), 216-236 (FAAV…YAII), 241-261 (WYVI…AIYS), and 266-286 (IIDV…FEYG).

Its subcellular location is the membrane. It carries out the reaction N-(2-hydroxy-fatty acyl)-dihydroceramide + a 1,2-diacyl-sn-glycero-3-phospho-(1D-myo-inositol) = inositol-1-phospho-N-(2-hydroxy-fatty acyl)-dihydroceramide + a 1,2-diacyl-sn-glycerol. In terms of biological role, catalyzes the addition of a phosphorylinositol group onto dihydroceramide to form phosphoinositol dihydroceramide (PI-DHC), an essential step in sphingolipid biosynthesis. The protein is Phosphoinositol dihydroceramide synthase of Bacteroides thetaiotaomicron (strain ATCC 29148 / DSM 2079 / JCM 5827 / CCUG 10774 / NCTC 10582 / VPI-5482 / E50).